The chain runs to 188 residues: Photosystem I assembly protein Ycf4 (188 aa).

A run of 2 helical transmembrane segments spans residues 26–46 (IWWG…GLSS) and 70–90 (LLFY…TIIL).

The protein belongs to the Ycf4 family.

Its subcellular location is the cellular thylakoid membrane. In terms of biological role, seems to be required for the assembly of the photosystem I complex. The chain is Photosystem I assembly protein Ycf4 from Rippkaea orientalis (strain PCC 8801 / RF-1) (Cyanothece sp. (strain PCC 8801)).